The chain runs to 218 residues: Octanoyltransferase (218 aa).

The 184-residue stretch at 27-210 (AGAEETLYLL…QFRAIFADST (184 aa)) folds into the BPL/LPL catalytic domain. Residues 72–79 (RGGNITCH), 139–141 (SIG), and 152–154 (GFA) each bind substrate. C170 functions as the Acyl-thioester intermediate in the catalytic mechanism.

The protein belongs to the LipB family.

The protein resides in the cytoplasm. The catalysed reaction is octanoyl-[ACP] + L-lysyl-[protein] = N(6)-octanoyl-L-lysyl-[protein] + holo-[ACP] + H(+). It participates in protein modification; protein lipoylation via endogenous pathway; protein N(6)-(lipoyl)lysine from octanoyl-[acyl-carrier-protein]: step 1/2. Catalyzes the transfer of endogenously produced octanoic acid from octanoyl-acyl-carrier-protein onto the lipoyl domains of lipoate-dependent enzymes. Lipoyl-ACP can also act as a substrate although octanoyl-ACP is likely to be the physiological substrate. In Nitratidesulfovibrio vulgaris (strain DSM 19637 / Miyazaki F) (Desulfovibrio vulgaris), this protein is Octanoyltransferase.